Here is a 48-residue protein sequence, read N- to C-terminus: Large ribosomal subunit protein eL40 (48 aa).

Belongs to the eukaryotic ribosomal protein eL40 family.

In Methanosphaerula palustris (strain ATCC BAA-1556 / DSM 19958 / E1-9c), this protein is Large ribosomal subunit protein eL40.